A 230-amino-acid polypeptide reads, in one-letter code: ATP synthase subunit a (230 aa).

5 helical membrane passes run 17-37, 78-98, 107-127, 165-187, and 198-218; these read LPIT…FIMA, IFPF…IGVI, DLSV…WFGI, LFGN…GFLV, and EAII…AGGI.

Belongs to the ATPase A chain family. In terms of assembly, F-type ATPases have 2 components, CF(1) - the catalytic core - and CF(0) - the membrane proton channel. CF(1) has five subunits: alpha(3), beta(3), gamma(1), delta(1), epsilon(1). CF(0) has three main subunits: a(1), b(2) and c(9-12). The alpha and beta chains form an alternating ring which encloses part of the gamma chain. CF(1) is attached to CF(0) by a central stalk formed by the gamma and epsilon chains, while a peripheral stalk is formed by the delta and b chains.

Its subcellular location is the cell inner membrane. Its function is as follows. Key component of the proton channel; it plays a direct role in the translocation of protons across the membrane. In Legionella pneumophila (strain Paris), this protein is ATP synthase subunit a.